The chain runs to 391 residues: S-adenosylmethionine synthase (391 aa).

His-14 is a binding site for ATP. Residue Asp-16 participates in Mg(2+) binding. Glu-42 provides a ligand contact to K(+). L-methionine contacts are provided by Glu-55 and Gln-98. The interval 98–108 is flexible loop; sequence QSADIAMGVDE. ATP is bound by residues 172–174, 238–239, Asp-247, 253–254, Ala-270, and Lys-274; these read DGK, RF, and RK. Asp-247 lines the L-methionine pocket. Lys-278 is an L-methionine binding site.

Belongs to the AdoMet synthase family. Homotetramer; dimer of dimers. It depends on Mg(2+) as a cofactor. K(+) serves as cofactor.

The protein resides in the cytoplasm. The enzyme catalyses L-methionine + ATP + H2O = S-adenosyl-L-methionine + phosphate + diphosphate. It functions in the pathway amino-acid biosynthesis; S-adenosyl-L-methionine biosynthesis; S-adenosyl-L-methionine from L-methionine: step 1/1. Functionally, catalyzes the formation of S-adenosylmethionine (AdoMet) from methionine and ATP. The overall synthetic reaction is composed of two sequential steps, AdoMet formation and the subsequent tripolyphosphate hydrolysis which occurs prior to release of AdoMet from the enzyme. This Clostridium acetobutylicum (strain ATCC 824 / DSM 792 / JCM 1419 / IAM 19013 / LMG 5710 / NBRC 13948 / NRRL B-527 / VKM B-1787 / 2291 / W) protein is S-adenosylmethionine synthase.